A 607-amino-acid chain; its full sequence is Autophagy-related protein 22-2 (607 aa).

Residues 9–31 are disordered; sequence FQSPSPDEGVQQRPPRYVGEDTT. Residues 44 to 64 form a helical membrane-spanning segment; it reads YGIAAEVFAVCGVGSFLPLTL. N-linked (GlcNAc...) asparagine glycans are attached at residues Asn88 and Asn91. Transmembrane regions (helical) follow at residues 111 to 131, 143 to 160, and 161 to 178; these read SFAMYTFSLAVLIQALTLISF, TLLMVFGFAGALASMLFV, and FIAPPLFVIGSILVVVGV. Residues 203 to 263 are disordered; the sequence is QEGKADDGTE…GMGTKAPLSS (61 aa). Asn235 carries an N-linked (GlcNAc...) asparagine glycan. 8 helical membrane-spanning segments follow: residues 277–297, 310–330, 381–401, 415–435, 450–470, 484–504, 521–543, and 552–572; these read GIGLGYCAAVFVQIISIIMLL, TLPMRFVLLLVGIWWGAFTLV, VLIFLVAWFLLSDAMATVSGT, PLIGLLSITATLSGMTGAFLW, IILCIALFEMIPLYGLLAYIP, WEIFPLAIVHGVVSGGLASYC, YALYAATDKGSSFIGPAIVGGIV, and GFFFMAILIVLPIPLVWMVNA. Residues 585–607 form a disordered region; it reads TLGKSHGGPAEDAQEAEGLLARE.

The protein belongs to the ATG22 family.

The protein localises to the vacuole membrane. Functionally, vacuolar effluxer which mediate the efflux of amino acids resulting from autophagic degradation. The release of autophagic amino acids allows the maintenance of protein synthesis and viability during nitrogen starvation. The protein is Autophagy-related protein 22-2 (atg22-2) of Penicillium rubens (strain ATCC 28089 / DSM 1075 / NRRL 1951 / Wisconsin 54-1255) (Penicillium chrysogenum).